Consider the following 445-residue polypeptide: tRNA modification GTPase MnmE (445 aa).

(6S)-5-formyl-5,6,7,8-tetrahydrofolate-binding residues include Arg21, Glu78, and Lys117. Positions 213–370 constitute a TrmE-type G domain; it reads GFRIALVGAP…LKETLSERVV (158 aa). GTP contacts are provided by residues 223–228, 242–248, and 267–270; these read NAGKST, TATPGTT, and DTAG. 2 residues coordinate Mg(2+): Ser227 and Thr248. Lys445 serves as a coordination point for (6S)-5-formyl-5,6,7,8-tetrahydrofolate.

This sequence belongs to the TRAFAC class TrmE-Era-EngA-EngB-Septin-like GTPase superfamily. TrmE GTPase family. As to quaternary structure, homodimer. Heterotetramer of two MnmE and two MnmG subunits. K(+) serves as cofactor.

Its subcellular location is the cytoplasm. Its function is as follows. Exhibits a very high intrinsic GTPase hydrolysis rate. Involved in the addition of a carboxymethylaminomethyl (cmnm) group at the wobble position (U34) of certain tRNAs, forming tRNA-cmnm(5)s(2)U34. This Phenylobacterium zucineum (strain HLK1) protein is tRNA modification GTPase MnmE.